The chain runs to 254 residues: Triosephosphate isomerase (254 aa).

Asparagine 9–lysine 11 lines the substrate pocket. The Electrophile role is filled by histidine 96. Catalysis depends on glutamate 168, which acts as the Proton acceptor. Substrate is bound by residues glycine 174 and serine 213.

Belongs to the triosephosphate isomerase family. Homodimer.

It is found in the cytoplasm. It catalyses the reaction D-glyceraldehyde 3-phosphate = dihydroxyacetone phosphate. Its pathway is carbohydrate biosynthesis; gluconeogenesis. The protein operates within carbohydrate degradation; glycolysis; D-glyceraldehyde 3-phosphate from glycerone phosphate: step 1/1. Functionally, involved in the gluconeogenesis. Catalyzes stereospecifically the conversion of dihydroxyacetone phosphate (DHAP) to D-glyceraldehyde-3-phosphate (G3P). This Buchnera aphidicola subsp. Schizaphis graminum (strain Sg) protein is Triosephosphate isomerase.